Consider the following 753-residue polypeptide: MAPDSDPFPEGPLLKLLPLDARDRGTQRCRLGPAALHALGARLGSAVKISLPDGGSCLCTAWPRRDGADGFVQLDPLCASPGAAVGASRSRRSLSLNRLLLVPCPPLRRVAVWPVLRERAGAPGARNTAAVLEAAQELLRNRPISLGHVVVAPPGAPGLVAALHIVGGTPSPDPAGLVTPRTRVSLGGEPPSEAQPQPEVPLGGLSEAADSLRELLRLPLRYPRALTALGLAVPRGVLLAGPPGVGKTQLVRAVAREAGAELLAVSAPALQGSRPGETEENVRRVFQRARELASRGPSLLFLDEMDALCPQRGSRAPESRVVAQVLTLLDGASGDREVVVVGATNRPDALDPALRRPGRFDREVVIGTPTLKQRKEILQVITSKMPISSHVDLGLLAEMTVGYVGADLTALCREAAMHALLHSEKNQDNPVIDEIDFLEAFKNIQPSSFRSVIGLMDIKPVDWEEIGGLEDVKLKLKQSIEWPLKFPWEFVRMGLTQPKGVLLYGPPGCAKTTLVRALATSCHCSFVSVSGADLFSPFVGDSEKVLSQIFRQARASTPAILFLDEIDSILGARSASKTGCDVQERVLSVLLNELDGVGLKTIERRGSKSSQQEFQEVFNRSVMIIAATNRPDVLDTALLRPGRLDKIIYIPPPDHKGRLSILKVCTKTMPIGPDVSLENLAAETCFFSGADLRNLCTEAALLALQENGLDATTVKQEHFLKSLKTVKPSLSCKDLALYENLFKKEGFSNVEGI.

N-acetylmethionine is present on Met1. The required for interaction with AFG2A and CINP stretch occupies residues 1–189 (MAPDSDPFPE…PRTRVSLGGE (189 aa)). Positions 171-203 (SPDPAGLVTPRTRVSLGGEPPSEAQPQPEVPLG) are disordered. ATP contacts are provided by residues 241–248 (GPPGVGKT) and 505–512 (GPPGCAKT).

Belongs to the AAA ATPase family. AFG2 subfamily. Part of the 55LCC heterohexameric ATPase complex composed at least of AIRIM, AFG2A, AFG2B and CINP. Associates with pre-60S ribosomal particles. Expressed in both neurons and glia during embryonic and adult stages of brain development.

It is found in the cytoplasm. The protein resides in the cytoskeleton. The protein localises to the spindle. It localises to the nucleus. The catalysed reaction is ATP + H2O = ADP + phosphate + H(+). Its activity is regulated as follows. In the context of 55LCC heterohexameric ATPase complex, the ATPase activity is stimulated by DNA binding and inhibited in presence of RNA. In terms of biological role, ATP-dependent chaperone part of the 55LCC heterohexameric ATPase complex which is chromatin-associated and promotes replisome proteostasis to maintain replication fork progression and genome stability. Required for replication fork progression, sister chromatid cohesion, and chromosome stability. The ATPase activity is specifically enhanced by replication fork DNA and is coupled to cysteine protease-dependent cleavage of replisome substrates in response to replication fork damage. Uses ATPase activity to process replisome substrates in S-phase, facilitating their proteolytic turnover from chromatin to ensure DNA replication and mitotic fidelity. Plays an essential role in the cytoplasmic maturation steps of pre-60S ribosomal particles by promoting the release of shuttling protein RSL24D1/RLP24 from the pre-ribosomal particles. The chain is ATPase family gene 2 protein homolog B from Homo sapiens (Human).